The chain runs to 223 residues: ATP phosphoribosyltransferase (223 aa).

This sequence belongs to the ATP phosphoribosyltransferase family. Short subfamily. Heteromultimer composed of HisG and HisZ subunits.

Its subcellular location is the cytoplasm. The catalysed reaction is 1-(5-phospho-beta-D-ribosyl)-ATP + diphosphate = 5-phospho-alpha-D-ribose 1-diphosphate + ATP. Its pathway is amino-acid biosynthesis; L-histidine biosynthesis; L-histidine from 5-phospho-alpha-D-ribose 1-diphosphate: step 1/9. In terms of biological role, catalyzes the condensation of ATP and 5-phosphoribose 1-diphosphate to form N'-(5'-phosphoribosyl)-ATP (PR-ATP). Has a crucial role in the pathway because the rate of histidine biosynthesis seems to be controlled primarily by regulation of HisG enzymatic activity. This Sphingopyxis alaskensis (strain DSM 13593 / LMG 18877 / RB2256) (Sphingomonas alaskensis) protein is ATP phosphoribosyltransferase.